The primary structure comprises 249 residues: 2,3-bisphosphoglycerate-dependent phosphoglycerate mutase (249 aa).

Substrate is bound by residues 8–15, 21–22, R60, 87–90, K98, 114–115, and 183–184; these read RHGESVWN, TG, ERHY, RR, and GN. H9 functions as the Tele-phosphohistidine intermediate in the catalytic mechanism. The active-site Proton donor/acceptor is the E87.

It belongs to the phosphoglycerate mutase family. BPG-dependent PGAM subfamily.

It carries out the reaction (2R)-2-phosphoglycerate = (2R)-3-phosphoglycerate. The protein operates within carbohydrate degradation; glycolysis; pyruvate from D-glyceraldehyde 3-phosphate: step 3/5. In terms of biological role, catalyzes the interconversion of 2-phosphoglycerate and 3-phosphoglycerate. This is 2,3-bisphosphoglycerate-dependent phosphoglycerate mutase from Endomicrobium trichonymphae.